A 216-amino-acid chain; its full sequence is Putative transmembrane protein RNF32-DT (216 aa).

Residues 177 to 197 traverse the membrane as a helical segment; that stretch reads WIPLLLVAGCVSCFVGLAVCV.

Expressed only in testis.

The protein resides in the cytoplasm. It is found in the membrane. The protein is Putative transmembrane protein RNF32-DT of Homo sapiens (Human).